Here is a 183-residue protein sequence, read N- to C-terminus: Capsid protein (183 aa).

Residues 150-183 are disordered; it reads RQRGRTIRRRTPSPRRRRSQSPRRRRSQSRESQC. Basic residues predominate over residues 151–176; that stretch reads QRGRTIRRRTPSPRRRRSQSPRRRRS. The short motif at 158 to 175 is the Bipartite nuclear localization signal element; it reads RRTPSPRRRRSQSPRRRR. Ser162 and Ser170 each carry phosphoserine; by host. 2 consecutive repeat copies span residues 162-169 and 170-177. The segment at 162-177 is 2 X 8 AA repeats of S-P-R-R-R-[PR]-S-Q; it reads SPRRRRSQSPRRRRSQ. The tract at residues 177–183 is RNA binding; that stretch reads QSRESQC.

The protein belongs to the orthohepadnavirus core antigen family. Homodimerizes, then multimerizes. Interacts with cytosol exposed regions of viral L glycoprotein present in the reticulum-to-Golgi compartment. Interacts with human FLNB. Phosphorylated form interacts with host importin alpha; this interaction depends on the exposure of the NLS, which itself depends upon genome maturation and/or phosphorylation of the capsid protein. Interacts with host NUP153. In terms of processing, phosphorylated by host SRPK1, SRPK2, and maybe protein kinase C or GAPDH. Phosphorylation is critical for pregenomic RNA packaging. Protein kinase C phosphorylation is stimulated by HBx protein and may play a role in transport of the viral genome to the nucleus at the late step during the viral replication cycle.

The protein localises to the virion. Its subcellular location is the host cytoplasm. In terms of biological role, self assembles to form an icosahedral capsid. Most capsids appear to be large particles with an icosahedral symmetry of T=4 and consist of 240 copies of capsid protein, though a fraction forms smaller T=3 particles consisting of 180 capsid proteins. Entering capsids are transported along microtubules to the nucleus. Phosphorylation of the capsid is thought to induce exposure of nuclear localization signal in the C-terminal portion of the capsid protein that allows binding to the nuclear pore complex via the importin (karyopherin-) alpha and beta. Capsids are imported in intact form through the nuclear pore into the nuclear basket, where it probably binds NUP153. Only capsids that contain the mature viral genome can release the viral DNA and capsid protein into the nucleoplasm. Immature capsids get stuck in the basket. Capsids encapsulate the pre-genomic RNA and the P protein. Pre-genomic RNA is reverse-transcribed into DNA while the capsid is still in the cytoplasm. The capsid can then either be directed to the nucleus, providing more genomes for transcription, or bud through the endoplasmic reticulum to provide new virions. This is Capsid protein from Homo sapiens (Human).